We begin with the raw amino-acid sequence, 379 residues long: Salicylate/benzoate carboxyl methyltransferase (379 aa).

Tyrosine 40 contributes to the S-adenosyl-L-homocysteine binding site. Position 47 (glutamine 47) interacts with salicylate. Positions 82, 87, 119, 120, 155, and 156 each coordinate S-adenosyl-L-homocysteine. Salicylate-binding residues include histidine 176 and tryptophan 177. Residues asparagine 188, aspartate 275, phenylalanine 277, and asparagine 278 each contribute to the Mg(2+) site.

This sequence belongs to the methyltransferase superfamily. Type-7 methyltransferase family. SABATH subfamily. Homodimer. The cofactor is Mg(2+). In terms of tissue distribution, expressed in flowers and at lower levels in leaves and stems. Hardly detected in roots and siliques. Expressed in the sepals and the leaf trichomes and hydathodes.

The enzyme catalyses benzoate + S-adenosyl-L-methionine = methyl benzoate + S-adenosyl-L-homocysteine. It carries out the reaction salicylate + S-adenosyl-L-methionine = methyl salicylate + S-adenosyl-L-homocysteine. Its function is as follows. Methyltransferase involved in the biosynthesis of methylsalicylate in response to stresses. Utilizes salicylic acid (SA) more efficiently than benzoic acid (BA). Can also use anthranilic acid and m-hydroxybenzoic acid as substrate. The chain is Salicylate/benzoate carboxyl methyltransferase (BSMT1) from Arabidopsis thaliana (Mouse-ear cress).